The chain runs to 31 residues: Cyclotide mden-K (31 aa).

Residues 1–31 constitute a cross-link (cyclopeptide (Gly-Asn)); sequence GSIPCGESCVWIPCISSVVGCACKNKVCYKN. Intrachain disulfides connect Cys-5/Cys-21, Cys-9/Cys-23, and Cys-14/Cys-28.

It belongs to the cyclotide family. Bracelet subfamily. This is a cyclic peptide.

In terms of biological role, probably participates in a plant defense mechanism. This is Cyclotide mden-K from Melicytus dentatus (Tree violet).